The primary structure comprises 667 residues: Cylicin-1 (667 aa).

2 disordered regions span residues 121–251 (PYTH…SSNV) and 275–634 (SQNN…ILPS). A compositionally biased stretch (basic and acidic residues) spans 129-172 (KKAESKKYKDDKKETALKKISKKDTGPHEVDEKPKRRNKADKTP). Residues 173-182 (SKSSHGSQLS) are compositionally biased toward low complexity. Positions 187 to 197 (SKSETNPESKD) are enriched in basic and acidic residues. Positions 223 to 237 (STSTKKYSKSSKNNS) are enriched in low complexity. The segment covering 238–251 (DAVSETCSKNSSNV) has biased composition (polar residues). Composition is skewed to basic and acidic residues over residues 284–326 (KKDA…KDTE), 345–371 (SKKD…DAKK), 380–394 (SKKD…KDAE), 417–431 (SKKD…KDAE), 438–464 (GDSK…KDAV), 483–506 (SKKD…KEST), 521–533 (SKKD…KKAT), 549–558 (KKTEMFKSSD), and 583–593 (DSKKDAVEPKR). A run of 9 repeats spans residues 287–305 (AKKD…DSKD), 306–337 (AKKD…DSKD), 338–368 (AKKG…DSKD), 369–405 (AKKD…DSKD), 406–442 (AKKD…DSKN), 443–475 (AKKD…SEGD), 476–516 (AKKS…ESKK), 517–547 (VKRD…SKRY), and 548–569 (LKKT…FKPG). The tract at residues 287–569 (AKKDAKGKGS…ESEESLFKPG (283 aa)) is 9 X approximate tandem repeats. A compositionally biased stretch (pro residues) spans 624–633 (PLPPCEPILP).

Interacts with proteins of spermatozoa head including ACTL7A, CCIN, FAM209A and SPACA1; the interactions may be necessary for proper acrosome attachment to the nuclear envelope. Testis.

It localises to the cytoplasm. The protein resides in the cytoskeleton. The protein localises to the perinuclear theca. It is found in the calyx. Its function is as follows. Plays a role in the establishment of normal sperm morphology during spermatogenesis and is required for acrosome attachment to the nuclear envelope. The sequence is that of Cylicin-1 (CYLC1) from Bos taurus (Bovine).